The sequence spans 266 residues: Interleukin-1 beta (266 aa).

Positions 1 to 113 (MAPVPEPINE…ETSSDEFLCD (113 aa)) are excised as a propeptide.

Belongs to the IL-1 family. As to quaternary structure, monomer. In its precursor form, weakly interacts with full-length MEFV; the mature cytokine does not interact at all. Interacts with integrins ITGAV:ITGBV and ITGA5:ITGB1; integrin-binding is required for IL1B signaling. Interacts with cargo receptor TMED10; the interaction is direct and is required for the secretion of IL1B mature form. Interacts with HSP90AB1; the interaction facilitates cargo translocation into the ERGIC. Interacts with HSP90B1; the interaction facilitates cargo translocation into the ERGIC.

The protein resides in the cytoplasm. It is found in the cytosol. The protein localises to the secreted. It localises to the lysosome. Its subcellular location is the extracellular exosome. In terms of biological role, potent pro-inflammatory cytokine. Initially discovered as the major endogenous pyrogen, induces prostaglandin synthesis, neutrophil influx and activation, T-cell activation and cytokine production, B-cell activation and antibody production, and fibroblast proliferation and collagen production. Promotes Th17 differentiation of T-cells. Synergizes with IL12/interleukin-12 to induce IFNG synthesis from T-helper 1 (Th1) cells. Plays a role in angiogenesis by inducing VEGF production synergistically with TNF and IL6. Involved in transduction of inflammation downstream of pyroptosis: its mature form is specifically released in the extracellular milieu by passing through the gasdermin-D (GSDMD) pore. In Cervus elaphus (Red deer), this protein is Interleukin-1 beta (IL1B).